The following is a 957-amino-acid chain: MQPLVMQGCPYTLPRCHEWHAADRFHHSSSLRNTCPQPQVRAAVTIPAPPWDGAGDPCLSPKLLNGTVGATGPLEPSAMNLCWNEIKKKSHNLRARLEAFSDLSGKLQLPLREIIDWLSQKDEELSAQLPLQGDVALVQQEKETHAAFMEEVKSKGPYISSVLESAQAFLSQHPFEELEESQSESKDTSPRQRIQNLSRFVWKQATVASELWEKLTARCVDQHRHIEHTLEHLLEIQGAMEELSSTLTQAEGVRATWEPIGDLFIDSLPEHIQAIKLFKEEFSPVKDGVKLVNDLAHQLAISDVHLSMENSRALEQINIRWKQLQVSVAERLKQLQDAHRDFGPGSQHFLSTSVQVPWERAISPNKVPYYINHQAQTTCWDHPKMTELYQTLADLNNIKFSAYRTAMKLRRVQKALRLDLVTLTTALEIFNEHDLQASEHVMDVVEVIHCLTALYERLEEERGILVNVPLCVDMSLNWLLNVFDSGRSGKMRALSFKTGIACLCGTEVKEKLQYLFSQVANSGSQCDQRHLGALLHEAIQVPRQLGEVAAFGGSNVEPSVRSCFRFSTGKPVIEASQFLEWVNLEPQSMVWLAVLHRVTIAEQVKHQTKCSICRQCPIKGFRYRSLKQFNVDICQTCFLTGRASKGNKLHYPIMEYYTPTTSSENMRDFATTLKNKFRSKQYFSKHPQRGYLPVQSVLESDCSETPASSPMLPHADTHSRIEHFASRLAEMESQNCSFFNDSLSPDDSIDEDQYLLRHSSPITDREPAFGQQAPCSMATESKGELEKILAHLEDENRILQGELRRLKWQHEEAAEAPTLVEGSAEATPDHRNEELLAEARILRQHKSRLETRMQILEDHNKQLESQLQRLRELLLQPPSESDGNGSAGSSLASSPRQSEGSHPREKGQTTPDTEVADDVGSKSQDVSLCLEDIMEKLRHAFPSVRSSDVTANTLLAS.

Spectrin repeat units follow at residues Asp-102–Glu-179 and Glu-231–Asp-337. The region spanning Trp-358 to Pro-383 is the WW domain. A ZZ-type; degenerate zinc finger spans residues Lys-605–Thr-661. Zn(2+)-binding residues include Cys-610, Cys-613, Cys-634, and Cys-637. Ser-748 carries the phosphoserine modification. Low complexity predominate over residues Gln-876–Ser-894. The interval Gln-876–Ser-923 is disordered. Thr-910 is subject to Phosphothreonine.

As to quaternary structure, interacts with PRX; this enhances phosphorylation. Identified in a dystroglycan complex that contains at least PRX, DRP2, UTRN, DMD and DAG1. Detected in quadriceps nerve Schwann cells. Detected in sciatic nerve. Detected in trigeminal nerve Schwann cells (at protein level). Detected in brain and spinal cord.

The protein resides in the postsynaptic density. It is found in the cell projection. The protein localises to the dendrite. It localises to the perikaryon. Its subcellular location is the cell membrane. Required for normal myelination and for normal organization of the cytoplasm and the formation of Cajal bands in myelinating Schwann cells. Required for normal PRX location at appositions between the abaxonal surface of the myelin sheath and the Schwann cell plasma membrane. Possibly involved in membrane-cytoskeleton interactions of the central nervous system. This is Dystrophin-related protein 2 (Drp2) from Mus musculus (Mouse).